A 163-amino-acid polypeptide reads, in one-letter code: Large ribosomal subunit protein bL17 (163 aa).

The tract at residues 127 to 163 (VAKKATRTRRSKKSAEAAAPAAVEAPATEEPKAESAE) is disordered. Residues 129–138 (KKATRTRRSK) show a composition bias toward basic residues. Over residues 142–154 (EAAAPAAVEAPAT) the composition is skewed to low complexity.

It belongs to the bacterial ribosomal protein bL17 family. In terms of assembly, part of the 50S ribosomal subunit. Contacts protein L32.

The polypeptide is Large ribosomal subunit protein bL17 (Bacteroides thetaiotaomicron (strain ATCC 29148 / DSM 2079 / JCM 5827 / CCUG 10774 / NCTC 10582 / VPI-5482 / E50)).